The primary structure comprises 240 residues: Phosphatidylserine decarboxylase proenzyme (240 aa).

The active-site Schiff-base intermediate with substrate; via pyruvic acid is the serine 205. The residue at position 205 (serine 205) is a Pyruvic acid (Ser); by autocatalysis.

This sequence belongs to the phosphatidylserine decarboxylase family. PSD-A subfamily. As to quaternary structure, heterodimer of a large membrane-associated beta subunit and a small pyruvoyl-containing alpha subunit. Pyruvate serves as cofactor. In terms of processing, is synthesized initially as an inactive proenzyme. Formation of the active enzyme involves a self-maturation process in which the active site pyruvoyl group is generated from an internal serine residue via an autocatalytic post-translational modification. Two non-identical subunits are generated from the proenzyme in this reaction, and the pyruvate is formed at the N-terminus of the alpha chain, which is derived from the carboxyl end of the proenzyme. The post-translation cleavage follows an unusual pathway, termed non-hydrolytic serinolysis, in which the side chain hydroxyl group of the serine supplies its oxygen atom to form the C-terminus of the beta chain, while the remainder of the serine residue undergoes an oxidative deamination to produce ammonia and the pyruvoyl prosthetic group on the alpha chain.

It is found in the cell membrane. The catalysed reaction is a 1,2-diacyl-sn-glycero-3-phospho-L-serine + H(+) = a 1,2-diacyl-sn-glycero-3-phosphoethanolamine + CO2. Its pathway is phospholipid metabolism; phosphatidylethanolamine biosynthesis; phosphatidylethanolamine from CDP-diacylglycerol: step 2/2. Its function is as follows. Catalyzes the formation of phosphatidylethanolamine (PtdEtn) from phosphatidylserine (PtdSer). The sequence is that of Phosphatidylserine decarboxylase proenzyme from Rhodopirellula baltica (strain DSM 10527 / NCIMB 13988 / SH1).